The chain runs to 469 residues: Glutamate--tRNA ligase (469 aa).

The short motif at 11–21 (PSPTGFIHLGN) is the 'HIGH' region element. The span at 121–131 (PRYDGTWRPEP) shows a compositional bias: basic and acidic residues. The tract at residues 121 to 141 (PRYDGTWRPEPGKVLPEPPPG) is disordered. Residues 243–247 (KMSKR) carry the 'KMSKS' region motif. Lys-246 serves as a coordination point for ATP.

Belongs to the class-I aminoacyl-tRNA synthetase family. Glutamate--tRNA ligase type 1 subfamily. As to quaternary structure, monomer.

Its subcellular location is the cytoplasm. The enzyme catalyses tRNA(Glu) + L-glutamate + ATP = L-glutamyl-tRNA(Glu) + AMP + diphosphate. Catalyzes the attachment of glutamate to tRNA(Glu) in a two-step reaction: glutamate is first activated by ATP to form Glu-AMP and then transferred to the acceptor end of tRNA(Glu). In Burkholderia multivorans (strain ATCC 17616 / 249), this protein is Glutamate--tRNA ligase.